An 842-amino-acid polypeptide reads, in one-letter code: Protein P (842 aa).

The segment at M1–Q177 is terminal protein domain (TP). The interval E178 to L345 is spacer. Residues D186–S273 form a disordered region. Residues G223–S239 are compositionally biased toward polar residues. Residues E346–Q689 form a polymerase/reverse transcriptase domain (RT) region. The 244-residue stretch at R356–I599 folds into the Reverse transcriptase domain. Positions 428, 550, and 551 each coordinate Mg(2+).

This sequence belongs to the hepadnaviridae P protein family.

It carries out the reaction DNA(n) + a 2'-deoxyribonucleoside 5'-triphosphate = DNA(n+1) + diphosphate. The catalysed reaction is Endonucleolytic cleavage to 5'-phosphomonoester.. Its activity is regulated as follows. Activated by host HSP70 and HSP40 in vitro to be able to bind the epsilon loop of the pgRNA. Because deletion of the RNase H region renders the protein partly chaperone-independent, the chaperones may be needed indirectly to relieve occlusion of the RNA-binding site by this domain. Inhibited by several reverse-transcriptase inhibitors: Lamivudine, Adefovir and Entecavir. Multifunctional enzyme that converts the viral RNA genome into dsDNA in viral cytoplasmic capsids. This enzyme displays a DNA polymerase activity that can copy either DNA or RNA templates, and a ribonuclease H (RNase H) activity that cleaves the RNA strand of RNA-DNA heteroduplexes in a partially processive 3'- to 5'-endonucleasic mode. Neo-synthesized pregenomic RNA (pgRNA) are encapsidated together with the P protein, and reverse-transcribed inside the nucleocapsid. Initiation of reverse-transcription occurs first by binding the epsilon loop on the pgRNA genome, and is initiated by protein priming, thereby the 5'-end of (-)DNA is covalently linked to P protein. Partial (+)DNA is synthesized from the (-)DNA template and generates the relaxed circular DNA (RC-DNA) genome. After budding and infection, the RC-DNA migrates in the nucleus, and is converted into a plasmid-like covalently closed circular DNA (cccDNA). The activity of P protein does not seem to be necessary for cccDNA generation, and is presumably released from (+)DNA by host nuclear DNA repair machinery. In Homo sapiens (Human), this protein is Protein P.